Consider the following 466-residue polypeptide: Glutamate--tRNA ligase 1 (466 aa).

The 'HIGH' region signature appears at 9–19 (PSPTGLLHIGN). The 'KMSKS' region motif lies at 238–242 (KLSKR). Lysine 241 is a binding site for ATP.

The protein belongs to the class-I aminoacyl-tRNA synthetase family. Glutamate--tRNA ligase type 1 subfamily. As to quaternary structure, monomer.

It localises to the cytoplasm. The catalysed reaction is tRNA(Glu) + L-glutamate + ATP = L-glutamyl-tRNA(Glu) + AMP + diphosphate. In terms of biological role, catalyzes the attachment of glutamate to tRNA(Glu) in a two-step reaction: glutamate is first activated by ATP to form Glu-AMP and then transferred to the acceptor end of tRNA(Glu). This chain is Glutamate--tRNA ligase 1, found in Gluconacetobacter diazotrophicus (strain ATCC 49037 / DSM 5601 / CCUG 37298 / CIP 103539 / LMG 7603 / PAl5).